The sequence spans 764 residues: Thyrotropin receptor (764 aa).

The signal sequence occupies residues 1–21 (MRPTPLLRLALLLVLPSSLWG). Residues 22–413 (ERCPSPPCEC…EFNPCEDIMG (392 aa)) are Extracellular-facing. Cys31 and Cys41 are joined by a disulfide. The stretch at 51–74 (PPSTQTLKFIETHLKTIPSRAFSN) is one LRR 1 repeat. N-linked (GlcNAc...) asparagine glycans are attached at residues Asn77 and Asn99. 5 LRR repeats span residues 125–150 (LPLLKFLGIFNTGLRVFPDLTKIYST), 152–174 (VFFILEITDNPYMTSVPANAFQG), 176–199 (SNETLTLKLYNNGFTSIQGHAFNG), 201–223 (KLDAVYLNKNKYLTVIDQDAFAG), and 225–248 (YSGPTLLDISYTSVTALPSKGLEH). N-linked (GlcNAc...) asparagine glycosylation is found at Asn177 and Asn198. Asn302 carries N-linked (GlcNAc...) asparagine glycosylation. The residue at position 385 (Tyr385) is a Sulfotyrosine. Residues 414-441 (YKFLRIVVWFVSLLALLGNVFVLVILLT) traverse the membrane as a helical segment. The Cytoplasmic segment spans residues 442 to 450 (SHYKLTVPR). A helical membrane pass occupies residues 451 to 473 (FLMCNLAFADFCMGLYLLLIASV). Residues 474–494 (DLYTQSEYYNHAIDWQTGPGC) lie on the Extracellular side of the membrane. An intrachain disulfide couples Cys494 to Cys569. The chain crosses the membrane as a helical span at residues 495–517 (NTAGFFTVFASELSVYTLTVITL). The Cytoplasmic segment spans residues 518–537 (ERWYAITFAMHLDRKIRLWH). A helical transmembrane segment spans residues 538–560 (AYVIMLGGWVCCFLLALLPLVGI). Residues 561 to 580 (SSYAKVSICLPMDTETPLAL) are Extracellular-facing. Residues 581–602 (AYIILVLLLNIIAFIIVCACYV) traverse the membrane as a helical segment. The Cytoplasmic portion of the chain corresponds to 603 to 625 (KIYITVRNPHYNPGDKDTRIAKR). The chain crosses the membrane as a helical span at residues 626–649 (MAVLIFTDFMCMAPISFYALSALM). At 650 to 660 (NKPLITVTNSK) the chain is on the extracellular side. The chain crosses the membrane as a helical span at residues 661–682 (ILLVLFYPLNSCANPFLYAIFT). The Cytoplasmic portion of the chain corresponds to 683–764 (KAFQRDVFML…TSKEYKQTVL (82 aa)). The short motif at 762 to 764 (TVL) is the PDZ-binding element.

Belongs to the G-protein coupled receptor 1 family. FSH/LSH/TSH subfamily. Interacts with heterodimer GPHA2:GPHB5; this interaction stimulates cAMP production. Interacts (via the PDZ-binding motif) with SCRIB; regulates TSHR trafficking and function. In terms of processing, glycosylated. Sulfated. Sulfation on Tyr-385 plays a role in thyrotropin receptor binding and activation.

It is found in the cell membrane. The protein resides in the basolateral cell membrane. Its function is as follows. Receptor for the thyroid-stimulating hormone (TSH) or thyrotropin. Also acts as a receptor for the heterodimeric glycoprotein hormone (GPHA2:GPHB5) or thyrostimulin. The activity of this receptor is mediated by G proteins which activate adenylate cyclase. Plays a central role in controlling thyroid cell metabolism. This Ovis aries (Sheep) protein is Thyrotropin receptor (TSHR).